Consider the following 298-residue polypeptide: Ethanolamine ammonia-lyase small subunit (298 aa).

Adenosylcob(III)alamin-binding residues include Val-210, Glu-231, and Cys-261.

This sequence belongs to the EutC family. In terms of assembly, the basic unit is a heterodimer which dimerizes to form tetramers. The heterotetramers trimerize; 6 large subunits form a core ring with 6 small subunits projecting outwards. The cofactor is adenosylcob(III)alamin.

The protein localises to the bacterial microcompartment. The catalysed reaction is ethanolamine = acetaldehyde + NH4(+). The protein operates within amine and polyamine degradation; ethanolamine degradation. Functionally, catalyzes the deamination of various vicinal amino-alcohols to oxo compounds. Allows this organism to utilize ethanolamine as the sole source of nitrogen and carbon in the presence of external vitamin B12. The polypeptide is Ethanolamine ammonia-lyase small subunit (Salmonella heidelberg (strain SL476)).